The sequence spans 405 residues: BRCA1-A complex subunit Abraxas 1 (405 aa).

The MPN domain occupies 7–154 (LGVLSGFVLG…CTHCLEHGLY (148 aa)). Ser48 bears the Phosphoserine mark. A coiled-coil region spans residues 208–262 (SLKEVRKINEMYAAIQEELKTICQKVEQSEREVEKLLMDVNRLKEVRKKQQAQAK). A disordered region spans residues 333–405 (ASPAPAAPLS…DTDYPRSPTF (73 aa)). Phosphoserine occurs at positions 382, 383, 392, and 402. The span at 386–397 (IDTEVGSPEDDT) shows a compositional bias: acidic residues. A pSXXF motif motif is present at residues 402–405 (SPTF).

It belongs to the FAM175 family. Abraxas subfamily. In terms of assembly, component of the ARISC complex, at least composed of UIMC1/RAP80, ABRAXAS1, BRCC3/BRCC36, BABAM2 and BABAM1/NBA1. Component of the BRCA1-A complex, at least composed of the BRCA1, BARD1, UIMC1/RAP80, ABRAXAS1, BRCC3/BRCC36, BABAM2 and BABAM1/NBA1. In the complex, interacts directly with UIMC1/RAP80, BRCC3/BRCC36 and BABAM2. Homodimer. Interacts directly (when phosphorylated at Ser-402) with BRCA1. The phosphorylated homodimer can interact directly with two BRCA1 chains, giving rise to a heterotetramer. Binds polyubiquitin. Post-translationally, phosphorylation of Ser-402 of the pSXXF motif by ATM or ATR constitutes a specific recognition motif for the BRCT domain of BRCA1.

The protein resides in the nucleus. Its function is as follows. Involved in DNA damage response and double-strand break (DSB) repair. Component of the BRCA1-A complex, acting as a central scaffold protein that assembles the various components of the complex and mediates the recruitment of BRCA1. The BRCA1-A complex specifically recognizes 'Lys-63'-linked ubiquitinated histones H2A and H2AX at DNA lesion sites, leading to target the BRCA1-BARD1 heterodimer to sites of DNA damage at DSBs. This complex also possesses deubiquitinase activity that specifically removes 'Lys-63'-linked ubiquitin on histones H2A and H2AX. The protein is BRCA1-A complex subunit Abraxas 1 of Rattus norvegicus (Rat).